Here is a 421-residue protein sequence, read N- to C-terminus: MSKTHLTEQKFSDFALHPQVVEALEKKGFYNCTPIQALALPLTLAGRDVAGQAQTGTGKTMAFLTSTFHYLLSHPAIDDRKVNQPRALIMAPTRELAVQIHADAEPLAQATGLKLGLAYGGDGYDKQLKVLESGVDILIGTTGRLIDYAKQNHINLGAIQVVVLDEADRMYDLGFIKDIRWLFRRMPPAAQRLNMLFSATLSYRVRELAFEQMNNAEYVEVEPEQKTGHRIKEELFYPSNEEKMRLLQTLIEEEWPDRAIIFANTKHRCEDIWGHLAADGHRVGLLTGDVAQKKRLRILDEFTRGDLDILVATDVAARGLHIPAVTHVFNYDLPDDCEDYVHRIGRTGRAGASGHSISLACEEYALNLPAIESYIGHSIPVSKYNPEALMNDLPKPLRLTRSRPGNGPRRAGAPRNRRRSG.

The Q motif signature appears at 9 to 37; that stretch reads QKFSDFALHPQVVEALEKKGFYNCTPIQA. One can recognise a Helicase ATP-binding domain in the interval 40–219; it reads LPLTLAGRDV…FEQMNNAEYV (180 aa). Position 53 to 60 (53 to 60) interacts with ATP; that stretch reads AQTGTGKT. A DEAD box motif is present at residues 165-168; that stretch reads DEAD. One can recognise a Helicase C-terminal domain in the interval 245 to 390; the sequence is RLLQTLIEEE…VSKYNPEALM (146 aa). The interval 396 to 421 is disordered; sequence PLRLTRSRPGNGPRRAGAPRNRRRSG. Residues 402–414 show a composition bias toward low complexity; it reads SRPGNGPRRAGAP.

It belongs to the DEAD box helicase family. RhlB subfamily. Component of the RNA degradosome, which is a multiprotein complex involved in RNA processing and mRNA degradation.

The protein resides in the cytoplasm. The enzyme catalyses ATP + H2O = ADP + phosphate + H(+). In terms of biological role, DEAD-box RNA helicase involved in RNA degradation. Has RNA-dependent ATPase activity and unwinds double-stranded RNA. This chain is ATP-dependent RNA helicase RhlB, found in Salmonella agona (strain SL483).